We begin with the raw amino-acid sequence, 115 residues long: UPF0122 protein lp_1634 (115 aa).

This sequence belongs to the UPF0122 family.

Functionally, might take part in the signal recognition particle (SRP) pathway. This is inferred from the conservation of its genetic proximity to ftsY/ffh. May be a regulatory protein. The chain is UPF0122 protein lp_1634 from Lactiplantibacillus plantarum (strain ATCC BAA-793 / NCIMB 8826 / WCFS1) (Lactobacillus plantarum).